The following is a 135-amino-acid chain: ATP synthase epsilon chain (135 aa).

This sequence belongs to the ATPase epsilon chain family. As to quaternary structure, F-type ATPases have 2 components, CF(1) - the catalytic core - and CF(0) - the membrane proton channel. CF(1) has five subunits: alpha(3), beta(3), gamma(1), delta(1), epsilon(1). CF(0) has three main subunits: a, b and c.

It localises to the cell inner membrane. Produces ATP from ADP in the presence of a proton gradient across the membrane. The sequence is that of ATP synthase epsilon chain from Rhizobium etli (strain ATCC 51251 / DSM 11541 / JCM 21823 / NBRC 15573 / CFN 42).